The primary structure comprises 447 residues: Methylenetetrahydrofolate--tRNA-(uracil-5-)-methyltransferase TrmFO (447 aa).

10 to 15 (GAGLAG) serves as a coordination point for FAD.

Belongs to the MnmG family. TrmFO subfamily. FAD is required as a cofactor.

The protein localises to the cytoplasm. It catalyses the reaction uridine(54) in tRNA + (6R)-5,10-methylene-5,6,7,8-tetrahydrofolate + NADH + H(+) = 5-methyluridine(54) in tRNA + (6S)-5,6,7,8-tetrahydrofolate + NAD(+). It carries out the reaction uridine(54) in tRNA + (6R)-5,10-methylene-5,6,7,8-tetrahydrofolate + NADPH + H(+) = 5-methyluridine(54) in tRNA + (6S)-5,6,7,8-tetrahydrofolate + NADP(+). Functionally, catalyzes the folate-dependent formation of 5-methyl-uridine at position 54 (M-5-U54) in all tRNAs. This Lactococcus lactis subsp. lactis (strain IL1403) (Streptococcus lactis) protein is Methylenetetrahydrofolate--tRNA-(uracil-5-)-methyltransferase TrmFO.